The following is a 475-amino-acid chain: ATP-dependent protease ATPase subunit HslU1 (475 aa).

Residues 1-27 (MMRRVTSSLPSALKLGRSLGPNVRFSG) constitute a mitochondrion transit peptide. ATP contacts are provided by residues Ile-66, 108-113 (GVGKTE), Asp-286, Glu-353, and Arg-425.

The protein belongs to the ClpX chaperone family. HslU subfamily. As to quaternary structure, a double ring-shaped homohexamer of HslV is capped on each side by a ring-shaped HslU homohexamer. The assembly of the HslU/HslV complex (HslVU) is dependent on binding of ATP.

Its subcellular location is the mitochondrion matrix. It is found in the kinetoplast. In terms of biological role, ATPase subunit of a proteasome-like degradation complex; this subunit has chaperone activity. The binding of ATP and its subsequent hydrolysis by HslU are essential for unfolding of protein substrates subsequently hydrolyzed by HslV. HslU recognizes the N-terminal part of its protein substrates and unfolds these before they are guided to HslV for hydrolysis. The HslVU protease complex functions in mitochondrial DNA replication by regulating DNA helicase PIF2 protein levels. In Trypanosoma brucei brucei (strain 927/4 GUTat10.1), this protein is ATP-dependent protease ATPase subunit HslU1 (HslU1).